The sequence spans 707 residues: Polyribonucleotide nucleotidyltransferase (707 aa).

Mg(2+) is bound by residues Asp-488 and Asp-494. The KH domain occupies 555–614 (PRLYVMKINPEKIRDVIGKGGAVIRALTEETGTQINIEEDGTITIASNDSAKADEAKRRI). The 69-residue stretch at 624–692 (GKVYEGAITK…EKGRVKLSMK (69 aa)) folds into the S1 motif domain.

The protein belongs to the polyribonucleotide nucleotidyltransferase family. It depends on Mg(2+) as a cofactor.

Its subcellular location is the cytoplasm. It catalyses the reaction RNA(n+1) + phosphate = RNA(n) + a ribonucleoside 5'-diphosphate. In terms of biological role, involved in mRNA degradation. Catalyzes the phosphorolysis of single-stranded polyribonucleotides processively in the 3'- to 5'-direction. In Polaromonas sp. (strain JS666 / ATCC BAA-500), this protein is Polyribonucleotide nucleotidyltransferase.